An 898-amino-acid chain; its full sequence is MEELTIWEQHTATLCRDPRRGFGIAISGGRDRASGSVVVSDVVPGGPADGRLQTGDHVVMVNGVSMESVTSTFAIQILKTCTKLANITVKRPRKIQLPATKAGTSGRGRQGLEEEADCGQGYDGDTSSGSGRSWDKRSRRARTGRRNQAGSRGRRSPGGNSEANGLALVSGFKRLPRQDVHMRPVKSVLVRRTESEEFGVTLGSQIFIKHITDSGLAARNRGLQEGDLILQINGVSSENLSLSDTRRLIEKSEGKLTLLVLRDRGQFLVNIPPAVSDSDSDSSFLDDISALGSELSQAVPSHVPPPPPHAQRSLDSDGTDSPRDSPPLRRENSLDSRTISEPDAPRHSSYDIYRVPSSQSAEDRGYSPDSRVVRFHKGTTIGLRLAGGNDVGIFVSGVQEGSPADGQGIQEGDQILQVNDVPFRNLTREEAVQFLVALPPGEEVELVTQRNEDIFRKMVQSRVGDSFYIRTHFELEASPPSGLGFTRGDVFHVLDTLCPGPGPSGARGTHWLAVRMGRDLREQERGIIPNQSRAEQLASLESAQRAVGAGPGASVGSSARAEFWRLRGLRRGAKKSTQRSREDLSALTRQGHYPPYERVVLREASFKRPVVILGPVADIAMQKLTAEMPDQFGIADSVLRTDSPSKIIKLDTVRVIAEKNKHALLDVTPSAVERLNYVQYYPIVVFCAPESRAALKALRQWLAPASRRSARRLYAQAQKLRKHSEHLFTATIPLRGTSDTWYQELKAVVREQQTRPIWTAEDQLDNSSEDNLELPHRGLADSSADLSCDSRVNSDYETDGEGYTDGEGYTDVDEGPPAPALARSSEPVLEEEPRSPRDHGRASGARGAQVDRHPYHSQGRQDSMRTYGQEALKKKFTRARDVESSDEDGYDWGPATDL.

The PDZ 1 domain occupies 11–93; it reads TATLCRDPRR…LANITVKRPR (83 aa). The disordered stretch occupies residues 98-165; that stretch reads PATKAGTSGR…SPGGNSEANG (68 aa). Phosphoserine occurs at positions 128, 156, 161, 195, and 313. Residues 187–264 enclose the PDZ 2 domain; the sequence is SVLVRRTESE…KLTLLVLRDR (78 aa). The segment at 295 to 368 is disordered; the sequence is LSQAVPSHVP…QSAEDRGYSP (74 aa). A compositionally biased stretch (basic and acidic residues) spans 312-349; it reads RSLDSDGTDSPRDSPPLRRENSLDSRTISEPDAPRHSS. Thr-319 is subject to Phosphothreonine. 2 positions are modified to phosphoserine: Ser-321 and Ser-360. One can recognise a PDZ 3 domain in the interval 369 to 435; it reads DSRVVRFHKG…LTREEAVQFL (67 aa). The SH3 domain occupies 464-538; sequence GDSFYIRTHF…PNQSRAEQLA (75 aa). The Guanylate kinase-like domain maps to 569–750; it reads LRRGAKKSTQ…WYQELKAVVR (182 aa). Ser-580 is subject to Phosphoserine. The interval 759-898 is disordered; sequence TAEDQLDNSS…GYDWGPATDL (140 aa). The segment covering 762–772 has biased composition (acidic residues); that stretch reads DQLDNSSEDNL. Over residues 780-790 the composition is skewed to low complexity; the sequence is ADSSADLSCDS. Residues 796–814 show a composition bias toward acidic residues; the sequence is YETDGEGYTDGEGYTDVDE. Basic and acidic residues predominate over residues 831–841; sequence EEPRSPRDHGR. Phosphoserine occurs at positions 835, 884, and 885.

This sequence belongs to the MAGUK family. Heterodimer with TJP1. Interacts with UBN1. Interacts with occludin OCLN and claudins. Interacts with PATJ. Interacts with FASLG. Interacts with CCND1. Phosphorylated.

Its subcellular location is the cell membrane. The protein localises to the cell junction. It is found in the tight junction. It localises to the nucleus. TJP1, TJP2, and TJP3 are closely related scaffolding proteins that link tight junction (TJ) transmembrane proteins such as claudins, junctional adhesion molecules, and occludin to the actin cytoskeleton. The tight junction acts to limit movement of substances through the paracellular space and as a boundary between the compositionally distinct apical and basolateral plasma membrane domains of epithelial and endothelial cells. Binds and recruits PATJ to tight junctions where it connects and stabilizes apical and lateral components of tight junctions. Promotes cell-cycle progression through the sequestration of cyclin D1 (CCND1) at tight junctions during mitosis which prevents CCND1 degradation during M-phase and enables S-phase transition. With TJP1 and TJP2, participates in the junctional retention and stability of the transcription factor DBPA, but is not involved in its shuttling to the nucleus. Contrary to TJP2, TJP3 is dispensable for individual viability, embryonic development, epithelial differentiation, and the establishment of TJs, at least in the laboratory environment. The polypeptide is Tight junction protein ZO-3 (TJP3) (Canis lupus familiaris (Dog)).